Consider the following 151-residue polypeptide: Transcription factor ATOH7 (151 aa).

A bHLH domain is found at 39–91; it reads KRRLAANARERRRMQGLNTAFDRLRKVVPQWGQDKKLSKYETLQMALSYIMAL.

The protein resides in the nucleus. It is found in the perikaryon. The protein localises to the cell projection. It localises to the axon. Transcription factor that binds to DNA at the consensus sequence 5'-CAG[GC]TG-3'. Positively regulates the determination of retinal ganglion cell fate and formation of the optic nerve and retino-hypothalamic tract. Required for retinal circadian rhythm photoentrainment. Plays a role in brainstem auditory signaling and binaural processing. During retinal neurogenesis, activates its own transcription, as well as the transcription of CHRNB3 and BRN3. The polypeptide is Transcription factor ATOH7 (Gallus gallus (Chicken)).